A 297-amino-acid chain; its full sequence is Ribosomal RNA small subunit methyltransferase H (297 aa).

S-adenosyl-L-methionine contacts are provided by residues 30–32 (GGY), Asp48, Phe75, Asp96, and Gln103.

It belongs to the methyltransferase superfamily. RsmH family.

The protein resides in the cytoplasm. It catalyses the reaction cytidine(1402) in 16S rRNA + S-adenosyl-L-methionine = N(4)-methylcytidine(1402) in 16S rRNA + S-adenosyl-L-homocysteine + H(+). Specifically methylates the N4 position of cytidine in position 1402 (C1402) of 16S rRNA. The sequence is that of Ribosomal RNA small subunit methyltransferase H from Ehrlichia canis (strain Jake).